We begin with the raw amino-acid sequence, 116 residues long: Secreted RxLR effector protein 9 (116 aa).

The first 17 residues, 1–17 (MRLIYIFMVSIVTTLHA), serve as a signal peptide directing secretion. The RxLR-dEER motif lies at 49-64 (RILRGTDGNVNREQER).

Belongs to the RxLR effector family.

It is found in the secreted. Its subcellular location is the host cytoplasm. The protein localises to the host nucleus. In terms of biological role, effector that acts as a broad suppressor of cell death to interrupt plant immunity. Inhibits cell death induced by cell death-inducing proteins, including the PAMP elicitor INF1 from P.infestans. The protein is Secreted RxLR effector protein 9 of Plasmopara viticola (Downy mildew of grapevine).